Here is a 403-residue protein sequence, read N- to C-terminus: MEIYIRLNADVEHDYAFQVSNEDTINNKIKKIFPSKTGLADLMVLRPSIFHEKEPVKFYKSIHPGYLSEGGCLMFHYEADNEENLEELNDSKPLIDQLWPGQLVVPEWKLSKKNIWVYTIIMLAWLYTDLPDAISPTPGICLTNQLSRLLIPVAKHMDLPEIAAKLEQEVQANYSSLVAQWLFFVMHIFKVGIITLFLKLGIANPISFNPYKLWSLRDLTSPSANGAKNSGGNNNTTDLKTRLRSLGWIGAKRATYDDYQTNYYNYVIDKMGGAVAAYRAGAIRKAAAPGIQLVAGEGFQSPLEDRFTASTFTAIKTERKFILSEEYFVELENNLKKILEEYDGDIGKMNAEIRRFRRFGIYEPDEKLASLVKLRREIADEKEKASNNDATFGIKKNDLKKSN.

Over 1–177 the chain is Lumenal; that stretch reads MEIYIRLNAD…QEVQANYSSL (177 aa). N-linked (GlcNAc...) asparagine glycosylation is found at Asn-89 and Asn-173. A helical; Signal-anchor for type II membrane protein transmembrane segment spans residues 178 to 198; sequence VAQWLFFVMHIFKVGIITLFL. Residues 199–403 are Cytoplasmic-facing; it reads KLGIANPISF…IKKNDLKKSN (205 aa). Residues 330–388 adopt a coiled-coil conformation; it reads ELENNLKKILEEYDGDIGKMNAEIRRFRRFGIYEPDEKLASLVKLRREIADEKEKASNN.

Its subcellular location is the endoplasmic reticulum membrane. Functionally, may be involved in the secretion of hexose transporters from the endoplasmic reticulum. Involved in secretion of GAL2 and HXT1. The polypeptide is Glucose-signaling factor 2 (GSF2) (Saccharomyces cerevisiae (strain ATCC 204508 / S288c) (Baker's yeast)).